The primary structure comprises 338 residues: Phenylalanine--tRNA ligase alpha subunit (338 aa).

Mg(2+) is bound at residue E253.

The protein belongs to the class-II aminoacyl-tRNA synthetase family. Phe-tRNA synthetase alpha subunit type 1 subfamily. Tetramer of two alpha and two beta subunits. Mg(2+) serves as cofactor.

It localises to the cytoplasm. It catalyses the reaction tRNA(Phe) + L-phenylalanine + ATP = L-phenylalanyl-tRNA(Phe) + AMP + diphosphate + H(+). This is Phenylalanine--tRNA ligase alpha subunit from Trichlorobacter lovleyi (strain ATCC BAA-1151 / DSM 17278 / SZ) (Geobacter lovleyi).